The following is a 327-amino-acid chain: S-adenosylmethionine/S-adenosylhomocysteine transporter (327 aa).

A run of 10 helical transmembrane segments spans residues 22–42 (CDMA…SFAL), 53–73 (LFVT…LLLC), 85–105 (IMPI…LEFI), 114–134 (TACF…YVQL), 143–163 (LGGL…GGSE), 165–185 (VAEW…ATCL), 202–222 (SLSM…LSLI), 240–260 (LFLQ…YNLF), 271–291 (FLSF…WLLL), and 294–314 (SFPP…RLIY). Residues 34–157 (FIWSSSFALS…LGLVSYLVYL (124 aa)) enclose the EamA 1 domain. Residues 189–313 (GWTLLRKLGR…GFMVLGCRLI (125 aa)) enclose the EamA 2 domain.

Belongs to the drug/metabolite transporter (DMT) superfamily. 10 TMS drug/metabolite exporter (DME) (TC 2.A.7.3) family.

The protein resides in the cell membrane. Its activity is regulated as follows. CCCP treatment reduces SAM intracellular uptake by 50%. Transports S-adenosylmethionine (SAM) and S-adenosylhomocysteine (SAH). Allows bacteria to acquire SAM from the eukaryotic host cell and to likely remove the toxic by-product SAH. In Chlamydia trachomatis serovar L2 (strain ATCC VR-902B / DSM 19102 / 434/Bu), this protein is S-adenosylmethionine/S-adenosylhomocysteine transporter.